Reading from the N-terminus, the 478-residue chain is Adenosylhomocysteinase (478 aa).

T57, D139, and E201 together coordinate substrate. 202 to 204 (TTT) is a binding site for NAD(+). The substrate site is built by K231 and D235. NAD(+) is bound by residues N236, 265–270 (GYGDVG), E288, N323, 344–346 (IGH), and N392.

It belongs to the adenosylhomocysteinase family. NAD(+) is required as a cofactor.

It is found in the cytoplasm. It catalyses the reaction S-adenosyl-L-homocysteine + H2O = L-homocysteine + adenosine. The protein operates within amino-acid biosynthesis; L-homocysteine biosynthesis; L-homocysteine from S-adenosyl-L-homocysteine: step 1/1. In terms of biological role, may play a key role in the regulation of the intracellular concentration of adenosylhomocysteine. The chain is Adenosylhomocysteinase from Corynebacterium glutamicum (strain R).